The chain runs to 283 residues: Para-Rep C10 (283 aa).

In terms of domain architecture, CRESS-DNA virus Rep endonuclease spans 3–96 (SIRAIHWCFT…IDGPWEYGTW (94 aa)). Positions 10–13 (CFTL) match the RCR-1 motif. The a divalent metal cation site is built by Glu-36 and His-42. The RCR-2 signature appears at 42–44 (HLQ). Residues 51-71 (KQTTLKKMKELLPGAHLEMAR) carry the Nuclear localization signal motif. Tyr-79 serves as the catalytic For DNA cleavage activity. Residues 79–82 (YCQK) carry the RCR-3 motif. Glu-84 lines the a divalent metal cation pocket. Positions 96–102 (WISTGSH) match the Nuclear localization signal motif. ATP is bound at residue 172 to 180 (GPHGGEGKS).

It belongs to the nanoviridea/circoviridae replication-associated protein family. Homooligomer (Potential). Rep binds to repeated DNA motifs (iterons). Mg(2+) is required as a cofactor. Mn(2+) serves as cofactor.

The protein resides in the host nucleus. It carries out the reaction ATP + H2O = ADP + phosphate + H(+). Initiates and terminates the replication only of its own subviral DNA molecule. The closed circular ssDNA genome is first converted to a superhelical dsDNA. Rep binds a specific hairpin at the genome origin of replication. Introduces an endonucleolytic nick within the intergenic region of the genome, thereby initiating the rolling circle replication (RCR). Following cleavage, binds covalently to the 5'-phosphate of DNA as a tyrosyl ester. The cleavage gives rise to a free 3'-OH that serves as a primer for the cellular DNA polymerase. The polymerase synthesizes the (+) strand DNA by rolling circle mechanism. After one round of replication, a Rep-catalyzed nucleotidyl transfer reaction releases a circular single-stranded virus genome, thereby terminating the replication. Displays origin-specific DNA cleavage, nucleotidyl transferase, ATPase and helicase activities. The protein is Para-Rep C10 (C10) of Milk vetch dwarf C10 alphasatellite (MVDC10A).